Reading from the N-terminus, the 434-residue chain is Putative ankyrin repeat protein FPV023 (434 aa).

ANK repeat units lie at residues 33–62, 134–163, 167–197, 201–230, 236–265, 269–299, and 303–330; these read RLKI…DPVA, LTIS…DINF, IGNT…DINI, YGTT…DPNS, IGTK…DPNI, AGVT…DPNI, and NGTT…DINI.

The polypeptide is Putative ankyrin repeat protein FPV023 (Fowlpox virus (strain NVSL) (FPV)).